The primary structure comprises 450 residues: NAD-specific glutamate dehydrogenase (450 aa).

3 residues coordinate substrate: Lys-90, Gln-111, and Lys-114. Lys-126 serves as the catalytic Proton donor. Gly-165 is a binding site for substrate. NAD(+) is bound by residues Thr-210 and Asn-241. Ser-381 contributes to the substrate binding site.

It belongs to the Glu/Leu/Phe/Val dehydrogenases family. As to quaternary structure, homohexamer.

It carries out the reaction L-glutamate + NAD(+) + H2O = 2-oxoglutarate + NH4(+) + NADH + H(+). Its pathway is amino-acid degradation; L-glutamate degradation via hydroxyglutarate pathway; crotonoyl-CoA from L-glutamate: step 1/5. This is NAD-specific glutamate dehydrogenase (gdh) from Clostridium symbiosum (Bacteroides symbiosus).